A 359-amino-acid chain; its full sequence is Pyruvate dehydrogenase E1 component subunit beta, mitochondrial (359 aa).

A mitochondrion-targeting transit peptide spans methionine 1–alanine 30. A Phosphotyrosine modification is found at tyrosine 67. Position 89 (glutamate 89) interacts with thiamine diphosphate. 5 residues coordinate K(+): isoleucine 142, alanine 190, isoleucine 191, aspartate 193, and asparagine 195. Lysine 354 bears the N6-acetyllysine mark.

As to quaternary structure, heterotetramer of two PDHA1 and two PDHB subunits. The heterotetramer interacts with DLAT, and is part of the multimeric pyruvate dehydrogenase complex that contains multiple copies of pyruvate dehydrogenase (E1), dihydrolipoamide acetyltransferase (DLAT, E2) and lipoamide dehydrogenase (DLD, E3). These subunits are bound to an inner core composed of about 48 DLAT and 12 PDHX molecules. Interacts with DLAT. Thiamine diphosphate serves as cofactor.

The protein localises to the mitochondrion matrix. The enzyme catalyses N(6)-[(R)-lipoyl]-L-lysyl-[protein] + pyruvate + H(+) = N(6)-[(R)-S(8)-acetyldihydrolipoyl]-L-lysyl-[protein] + CO2. In terms of biological role, the pyruvate dehydrogenase complex catalyzes the overall conversion of pyruvate to acetyl-CoA and CO(2), and thereby links the glycolytic pathway to the tricarboxylic cycle. This Mus musculus (Mouse) protein is Pyruvate dehydrogenase E1 component subunit beta, mitochondrial (Pdhb).